Here is a 196-residue protein sequence, read N- to C-terminus: Pyridoxal 5'-phosphate synthase subunit PdxT (196 aa).

46–48 (GES) contributes to the L-glutamine binding site. C78 functions as the Nucleophile in the catalytic mechanism. Residues R105 and 133-134 (IR) each bind L-glutamine. Active-site charge relay system residues include H169 and E171.

The protein belongs to the glutaminase PdxT/SNO family. In the presence of PdxS, forms a dodecamer of heterodimers. Only shows activity in the heterodimer.

The catalysed reaction is aldehydo-D-ribose 5-phosphate + D-glyceraldehyde 3-phosphate + L-glutamine = pyridoxal 5'-phosphate + L-glutamate + phosphate + 3 H2O + H(+). It catalyses the reaction L-glutamine + H2O = L-glutamate + NH4(+). Its pathway is cofactor biosynthesis; pyridoxal 5'-phosphate biosynthesis. In terms of biological role, catalyzes the hydrolysis of glutamine to glutamate and ammonia as part of the biosynthesis of pyridoxal 5'-phosphate. The resulting ammonia molecule is channeled to the active site of PdxS. The chain is Pyridoxal 5'-phosphate synthase subunit PdxT from Geobacillus kaustophilus (strain HTA426).